The primary structure comprises 242 residues: E3 ubiquitin-protein ligase AIRP2 (242 aa).

An RING-type zinc finger spans residues 146 to 184 (CGICLEIRNKVVLPTCNHSMCINCYRNWRARSQSCPFCR).

As to quaternary structure, interacts with ATP1/SDIRIP1. In terms of tissue distribution, expressed in germinating seeds, flower organs and siliques.

It is found in the cytoplasm. The protein localises to the cytosol. It carries out the reaction S-ubiquitinyl-[E2 ubiquitin-conjugating enzyme]-L-cysteine + [acceptor protein]-L-lysine = [E2 ubiquitin-conjugating enzyme]-L-cysteine + N(6)-ubiquitinyl-[acceptor protein]-L-lysine.. Functionally, possesses E3 ubiquitin-protein ligase activity in vitro when associated with the E2 enzyme UBC8 in vitro. Plays combinatory roles with AIRP1 in the positive regulation of the abscisic acid-mediated drought stress response. Plays a positive role in abscisic acid- and high salinity-regulated seed germination through the ubiquitin-proteasome-dependent down-regulation of ATP1/SDIRIP1. The chain is E3 ubiquitin-protein ligase AIRP2 from Arabidopsis thaliana (Mouse-ear cress).